A 111-amino-acid chain; its full sequence is Nucleoid-associated protein PputW619_3586 (111 aa).

The tract at residues 87-111 (EQSSQEKMGGMTAGMQLPPGFKMPF) is disordered.

Belongs to the YbaB/EbfC family. Homodimer.

It is found in the cytoplasm. It localises to the nucleoid. Its function is as follows. Binds to DNA and alters its conformation. May be involved in regulation of gene expression, nucleoid organization and DNA protection. The sequence is that of Nucleoid-associated protein PputW619_3586 from Pseudomonas putida (strain W619).